Consider the following 326-residue polypeptide: Bifunctional pinoresinol-lariciresinol reductase (326 aa).

NADP(+)-binding positions include Gly25 to Gly31, Arg50, and Lys59. The active-site Proton acceptor is the Lys153. Arg157 provides a ligand contact to NADP(+). A substrate-binding site is contributed by His285.

The protein belongs to the NmrA-type oxidoreductase family. Isoflavone reductase subfamily. As to quaternary structure, dimer.

The enzyme catalyses (+)-lariciresinol + NADP(+) = (+)-pinoresinol + NADPH + H(+). The catalysed reaction is (-)-secoisolariciresinol + NADP(+) = (+)-lariciresinol + NADPH + H(+). Its function is as follows. Reductase involved in lignan biosynthesis. Catalyzes the enantioselective conversion of (+)-pinoresinol into (+)-lariciresinol and of (+)-lariciresinol into (-)-secoisolariciresinol. Abstracts the 4R-hydride from the NADPH cofactor during catalysis. This chain is Bifunctional pinoresinol-lariciresinol reductase (PLR1), found in Linum album (Flax).